The chain runs to 305 residues: Ribonucleoside-diphosphate reductase small subunit (305 aa).

Fe cation contacts are provided by glutamate 64, glutamate 94, and histidine 97. Tyrosine 101 is an active-site residue. The chain crosses the membrane as a helical span at residues 150–170; sequence VLVFLLIEGIFFISSFYSIAT. Fe cation-binding residues include glutamate 157, glutamate 191, and histidine 194.

The protein belongs to the ribonucleoside diphosphate reductase small chain family. As to quaternary structure, heterotetramer composed of a homodimer of the large subunit (R1) and a homodimer of the small subunit (R2). Larger multisubunit protein complex are also active, composed of (R1)n(R2)n. It depends on Fe cation as a cofactor.

The protein resides in the host membrane. The catalysed reaction is a 2'-deoxyribonucleoside 5'-diphosphate + [thioredoxin]-disulfide + H2O = a ribonucleoside 5'-diphosphate + [thioredoxin]-dithiol. Its function is as follows. Ribonucleoside-diphosphate reductase holoenzyme provides the precursors necessary for viral DNA synthesis. Allows virus growth in non-dividing cells, as well as reactivation from latency in infected hosts. Catalyzes the biosynthesis of deoxyribonucleotides from the corresponding ribonucleotides. This Equus caballus (Horse) protein is Ribonucleoside-diphosphate reductase small subunit.